Consider the following 245-residue polypeptide: Cysteine-rich secretory protein 3 (245 aa).

Positions 1-22 are cleaved as a signal peptide; the sequence is MALLPVLLFLAAVLLPFFPASG. An SCP domain is found at 42–171; that stretch reads VNKHNDLRRT…TLKYYYVCQY (130 aa). 5 disulfide bridges follow: cysteine 191-cysteine 198, cysteine 194-cysteine 203, cysteine 207-cysteine 240, cysteine 216-cysteine 234, and cysteine 225-cysteine 238. Residues 207–240 form the ShKT domain; it reads CEYEDLVSNCDSLKKIAGCEHELLKENCKTTCQC.

Belongs to the CRISP family. As to quaternary structure, interacts with A1BG. In terms of tissue distribution, expressed in the salivary gland, in the ampulla and the seminal vesicle.

The protein resides in the secreted. In Equus caballus (Horse), this protein is Cysteine-rich secretory protein 3 (CRISP3).